Reading from the N-terminus, the 496-residue chain is UDP-N-acetylmuramoyl-L-alanyl-D-glutamate--2,6-diaminopimelate ligase (496 aa).

Residue Ser-32 participates in UDP-N-acetyl-alpha-D-muramoyl-L-alanyl-D-glutamate binding. An ATP-binding site is contributed by 116-122 (GTNGKTT). Residues 158–159 (TT), Ser-185, Gln-191, and Arg-193 contribute to the UDP-N-acetyl-alpha-D-muramoyl-L-alanyl-D-glutamate site. N6-carboxylysine is present on Lys-225. Residues Arg-389, 413–416 (DNPR), Gly-464, and Glu-468 each bind meso-2,6-diaminopimelate. The short motif at 413–416 (DNPR) is the Meso-diaminopimelate recognition motif element.

It belongs to the MurCDEF family. MurE subfamily. Mg(2+) serves as cofactor. Post-translationally, carboxylation is probably crucial for Mg(2+) binding and, consequently, for the gamma-phosphate positioning of ATP.

It is found in the cytoplasm. The catalysed reaction is UDP-N-acetyl-alpha-D-muramoyl-L-alanyl-D-glutamate + meso-2,6-diaminopimelate + ATP = UDP-N-acetyl-alpha-D-muramoyl-L-alanyl-gamma-D-glutamyl-meso-2,6-diaminopimelate + ADP + phosphate + H(+). It participates in cell wall biogenesis; peptidoglycan biosynthesis. Its function is as follows. Catalyzes the addition of meso-diaminopimelic acid to the nucleotide precursor UDP-N-acetylmuramoyl-L-alanyl-D-glutamate (UMAG) in the biosynthesis of bacterial cell-wall peptidoglycan. In Nostoc sp. (strain PCC 7120 / SAG 25.82 / UTEX 2576), this protein is UDP-N-acetylmuramoyl-L-alanyl-D-glutamate--2,6-diaminopimelate ligase.